Consider the following 509-residue polypeptide: Pyruvate kinase (509 aa).

A Phosphoserine modification is found at serine 29. Arginine 56 is a binding site for substrate. Residues asparagine 58 and serine 60 each contribute to the K(+) site. An ATP-binding site is contributed by asparagine 58–histidine 61. A Phosphoserine modification is found at serine 63. The K(+) site is built by aspartate 91 and threonine 92. Positions 98 and 184 each coordinate ATP. Glutamate 249 serves as a coordination point for Mg(2+). Substrate-binding residues include glycine 272 and aspartate 273. Aspartate 273 is a Mg(2+) binding site. Position 281 is a phosphoserine (serine 281). Residue threonine 305 participates in substrate binding. Serine 412 carries the post-translational modification Phosphoserine.

This sequence belongs to the pyruvate kinase family. In terms of assembly, homotetramer. It depends on Mg(2+) as a cofactor. K(+) serves as cofactor.

It catalyses the reaction pyruvate + ATP = phosphoenolpyruvate + ADP + H(+). It functions in the pathway carbohydrate degradation; glycolysis; pyruvate from D-glyceraldehyde 3-phosphate: step 5/5. The sequence is that of Pyruvate kinase (pyk1) from Schizosaccharomyces pombe (strain 972 / ATCC 24843) (Fission yeast).